The sequence spans 142 residues: Hemoglobin subunit alpha-2 (142 aa).

Ser-1 bears the N-acetylserine mark. In terms of domain architecture, Globin spans Ser-1–Arg-142. Residue His-59 coordinates O2. Residue His-88 coordinates heme b.

The protein belongs to the globin family. In terms of assembly, hb2 is a heterotetramer of two alpha-2 chains and two beta chains. In terms of tissue distribution, red blood cells.

In terms of biological role, involved in oxygen transport from gills to the various peripheral tissues. The sequence is that of Hemoglobin subunit alpha-2 (hba2) from Trematomus newnesi (Dusky notothen).